A 568-amino-acid polypeptide reads, in one-letter code: Serine/threonine-protein kinase WNK2 (568 aa).

A Protein kinase domain is found at Gly-24–Leu-281. ATP contacts are provided by residues Thr-104–Phe-107 and Lys-154. The active-site Proton acceptor is the Asp-171. The interval Ser-453–Cys-473 is disordered. The span at His-463–Ser-472 shows a compositional bias: basic and acidic residues.

The protein belongs to the protein kinase superfamily. Ser/Thr protein kinase family. WNK subfamily. Autophosphorylated.

It carries out the reaction L-seryl-[protein] + ATP = O-phospho-L-seryl-[protein] + ADP + H(+). The enzyme catalyses L-threonyl-[protein] + ATP = O-phospho-L-threonyl-[protein] + ADP + H(+). Functionally, regulates flowering time by modulating the photoperiod pathway. Possesses kinase activity in vitro. In Arabidopsis thaliana (Mouse-ear cress), this protein is Serine/threonine-protein kinase WNK2 (WNK2).